Here is a 199-residue protein sequence, read N- to C-terminus: Recombination protein RecR (199 aa).

Residues 58-73 (CQTCRILSETDLCSLC) form a C4-type zinc finger. Residues 81–176 (GQLCVVEMPS…TTTRIAHGVP (96 aa)) form the Toprim domain.

This sequence belongs to the RecR family.

In terms of biological role, may play a role in DNA repair. It seems to be involved in an RecBC-independent recombinational process of DNA repair. It may act with RecF and RecO. The protein is Recombination protein RecR of Nitrosococcus oceani (strain ATCC 19707 / BCRC 17464 / JCM 30415 / NCIMB 11848 / C-107).